The primary structure comprises 173 residues: Mesencephalic astrocyte-derived neurotrophic factor homolog (173 aa).

Positions 1-22 (MNTSHIVLMICFIVGVGQTALA) are cleaved as a signal peptide. Intrachain disulfides connect Cys-28–Cys-114, Cys-31–Cys-103, Cys-61–Cys-72, and Cys-148–Cys-151.

Belongs to the ARMET family.

It localises to the secreted. Functionally, required during the maturation of the embryonic nervous system for maintenance of neuronal and cuticular connectivity. Essential for maintenance of dopaminergic neurons and dopamine levels. This is Mesencephalic astrocyte-derived neurotrophic factor homolog from Drosophila virilis (Fruit fly).